The following is a 151-amino-acid chain: UPF0756 membrane protein Moth_0120 (151 aa).

A run of 4 helical transmembrane segments spans residues 6–26 (VILI…IAAA), 52–72 (AGLI…RVAP), 75–95 (MLQS…IIAT), and 111–131 (MMIG…GIPV).

It belongs to the UPF0756 family.

It is found in the cell membrane. The polypeptide is UPF0756 membrane protein Moth_0120 (Moorella thermoacetica (strain ATCC 39073 / JCM 9320)).